The sequence spans 586 residues: Clathrin heavy chain linker domain-containing protein 1 (586 aa).

Residues Met-174 to Gln-232 are a coiled coil.

This Macaca fascicularis (Crab-eating macaque) protein is Clathrin heavy chain linker domain-containing protein 1 (CLHC1).